Consider the following 360-residue polypeptide: Peptide chain release factor 1 (360 aa).

Gln233 carries the post-translational modification N5-methylglutamine. The disordered stretch occupies residues 283-305; it reads KLDAERAADRRSQVGSGDRSERI.

The protein belongs to the prokaryotic/mitochondrial release factor family. In terms of processing, methylated by PrmC. Methylation increases the termination efficiency of RF1.

The protein localises to the cytoplasm. In terms of biological role, peptide chain release factor 1 directs the termination of translation in response to the peptide chain termination codons UAG and UAA. The protein is Peptide chain release factor 1 of Methylocella silvestris (strain DSM 15510 / CIP 108128 / LMG 27833 / NCIMB 13906 / BL2).